The following is a 461-amino-acid chain: Fibrinogen C domain-containing protein 1 (461 aa).

The disordered stretch occupies residues 1-24; sequence MVNDRWKTMGGAAQLEDRPRDKPQ. Over 1–33 the chain is Cytoplasmic; it reads MVNDRWKTMGGAAQLEDRPRDKPQRPSCGYVLC. The segment covering 15 to 24 has biased composition (basic and acidic residues); sequence LEDRPRDKPQ. Residues 34 to 54 traverse the membrane as a helical; Signal-anchor for type II membrane protein segment; the sequence is TVLLALAVLLAVAVTGAVLFL. Topologically, residues 55–461 are extracellular; it reads NHAHAPGTAP…MKIRPVREDR (407 aa). The disordered stretch occupies residues 214–238; it reads GRPRNKADLQRAPARGTRPRGCATG. The Fibrinogen C-terminal domain occupies 235-458; it reads CATGSRPRDC…FSEMKIRPVR (224 aa). Residues cysteine 244 and cysteine 273 are joined by a disulfide bond. Residue asparagine 340 is glycosylated (N-linked (GlcNAc...) asparagine). Residues aspartate 393 and aspartate 395 each contribute to the Ca(2+) site. Cysteine 401 and cysteine 414 are oxidised to a cystine.

As to quaternary structure, homotetramer; disulfide-linked. As to expression, expressed in the small and large intestinal epithelial cells with a highly polarized localization to the apical surface corresponding to the brush border and in the ducts of the salivary gland.

Its subcellular location is the membrane. In terms of biological role, acetyl group-binding receptor which shows a high-affinity and calcium-dependent binding to acetylated structures such as chitin, some N-acetylated carbohydrates, and amino acids, but not to their non-acetylated counterparts. Can facilitate the endocytosis of acetylated components. This chain is Fibrinogen C domain-containing protein 1 (FIBCD1), found in Homo sapiens (Human).